The primary structure comprises 97 residues: Aspartyl/glutamyl-tRNA(Asn/Gln) amidotransferase subunit C (97 aa).

It belongs to the GatC family. As to quaternary structure, heterotrimer of A, B and C subunits.

The enzyme catalyses L-glutamyl-tRNA(Gln) + L-glutamine + ATP + H2O = L-glutaminyl-tRNA(Gln) + L-glutamate + ADP + phosphate + H(+). It catalyses the reaction L-aspartyl-tRNA(Asn) + L-glutamine + ATP + H2O = L-asparaginyl-tRNA(Asn) + L-glutamate + ADP + phosphate + 2 H(+). In terms of biological role, allows the formation of correctly charged Asn-tRNA(Asn) or Gln-tRNA(Gln) through the transamidation of misacylated Asp-tRNA(Asn) or Glu-tRNA(Gln) in organisms which lack either or both of asparaginyl-tRNA or glutaminyl-tRNA synthetases. The reaction takes place in the presence of glutamine and ATP through an activated phospho-Asp-tRNA(Asn) or phospho-Glu-tRNA(Gln). This is Aspartyl/glutamyl-tRNA(Asn/Gln) amidotransferase subunit C from Clostridium botulinum (strain Eklund 17B / Type B).